A 661-amino-acid chain; its full sequence is DnaJ protein ERDJ2B (661 aa).

Residues Met-1–Ser-8 lie on the Lumenal side of the membrane. A helical transmembrane segment spans residues Val-9–Val-29. Residues Lys-30–Ser-65 are Cytoplasmic-facing. The helical transmembrane segment at Phe-66 to Tyr-86 threads the bilayer. At His-87–Gly-190 the chain is on the lumenal side. Asn-90 is a glycosylation site (N-linked (GlcNAc...) asparagine). In terms of domain architecture, J spans Glu-99–Gly-164. A helical membrane pass occupies residues Gly-191–Ile-211. In terms of domain architecture, SEC63 spans Leu-206–Lys-597. The Cytoplasmic portion of the chain corresponds to Tyr-212–Glu-661. Residues Glu-608 to Glu-661 are disordered. The span at Gly-609–Glu-637 shows a compositional bias: acidic residues.

Interacts with OEP61/TPR7. In terms of tissue distribution, expressed in leaves, flower buds and flowers.

The protein resides in the endoplasmic reticulum membrane. Its function is as follows. Required for integral membrane and secreted preprotein translocation across the endoplasmic reticulum membrane. This chain is DnaJ protein ERDJ2B (ERDJ2B), found in Arabidopsis thaliana (Mouse-ear cress).